A 248-amino-acid polypeptide reads, in one-letter code: Small ribosomal subunit protein uS3 (248 aa).

One can recognise a KH type-2 domain in the interval 39–108 (IRKLVDKKLS…TVAVNVAEIP (70 aa)). The interval 214 to 248 (ETIARPQRRNDERRPEGGDRANRRRPTARRRAGGE) is disordered. Basic and acidic residues predominate over residues 221-234 (RRNDERRPEGGDRA). A compositionally biased stretch (basic residues) spans 235–248 (NRRRPTARRRAGGE).

This sequence belongs to the universal ribosomal protein uS3 family. Part of the 30S ribosomal subunit. Forms a tight complex with proteins S10 and S14.

Binds the lower part of the 30S subunit head. Binds mRNA in the 70S ribosome, positioning it for translation. The protein is Small ribosomal subunit protein uS3 of Deinococcus deserti (strain DSM 17065 / CIP 109153 / LMG 22923 / VCD115).